The following is a 765-amino-acid chain: Beta-glucosidase cel3A (765 aa).

The signal sequence occupies residues 1–24 (MRWSSPTSSSLSLVALLLVAHVDA). N-linked (GlcNAc...) asparagine glycosylation is found at asparagine 66, asparagine 124, asparagine 250, asparagine 304, asparagine 311, asparagine 349, asparagine 549, asparagine 588, asparagine 657, and asparagine 681.

This sequence belongs to the glycosyl hydrolase 3 family.

It is found in the secreted. The catalysed reaction is Hydrolysis of terminal, non-reducing beta-D-glucosyl residues with release of beta-D-glucose.. Its pathway is glycan metabolism; cellulose degradation. Beta-glucosidases are one of a number of cellulolytic enzymes involved in the degradation of cellulosic biomass. Catalyzes the last step releasing glucose from the inhibitory cellobiose. Shows higher activities on cellobiose and cellotriose but lower activities on laminarioligosaccharides and polymers. The sequence is that of Beta-glucosidase cel3A from Pyricularia oryzae (strain 70-15 / ATCC MYA-4617 / FGSC 8958) (Rice blast fungus).